The sequence spans 54 residues: MLYYALVFLIVAIIAGVLGFGGIAGASAGIAQVLFFLFLIFLVISLVAGLIRRT.

2 consecutive transmembrane segments (helical) span residues 5-25 and 30-50; these read ALVFLIVAIIAGVLGFGGIAG and IAQVLFFLFLIFLVISLVAGL.

The protein belongs to the UPF0391 family.

The protein resides in the cell membrane. This is UPF0391 membrane protein R00741 from Rhizobium meliloti (strain 1021) (Ensifer meliloti).